A 1558-amino-acid chain; its full sequence is Hybrid PKS-NRPS synthetase TAS1 (1558 aa).

The segment at 27–392 (YPMTKAQESL…RGLETPRAQV (366 aa)) is condensation (C) domain. The segment at 522–919 (TYKELNERSN…TITDVMPEVT (398 aa)) is adenylation (A) domain. Residues 995-1028 (TSGSSSSATPSLVSSGSTTCRSPSTSSCSDSRSA) form a disordered region. Residues 1027 to 1104 (SASPAITSAV…GQVDLLCGSE (78 aa)) form the Carrier domain. Ser1063 bears the O-(pantetheine 4'-phosphoryl)serine mark. The disordered stretch occupies residues 1116–1144 (LGRGRTKSPAKIVDSQGRSSPSTIPSGGR). The span at 1131-1140 (QGRSSPSTIP) shows a compositional bias: polar residues. The Ketosynthase family 3 (KS3) domain occupies 1145 to 1558 (KSEIAIVGIS…GVNAHCVLRS (414 aa)). Catalysis depends on for beta-ketoacyl synthase activity residues Cys1308, His1444, and Asn1484.

This sequence in the N-terminal section; belongs to the NRP synthetase family. It depends on pantetheine 4'-phosphate as a cofactor.

It carries out the reaction acetoacetyl-CoA + L-isoleucine + ATP = tenuazonic acid + AMP + diphosphate + CoA + 2 H(+). Its function is as follows. Hybrid PKS-NRPS synthetase that mediates the biosynthesis of the toxin tenuazonic acid (TeA), an inhibitor of protein biosynthesis on ribosomes by suppressing the release of new protein. TAS1 alone is sufficient for TeA synthesis via the condensation of isoleucine (Ile) with acetoacetyl-CoA by the N-terminal NRPS module and subsequent cyclization conducted by the C-terminal KS domain. In Gloeophyllum trabeum (strain ATCC 11539 / FP-39264 / Madison 617) (Brown rot fungus), this protein is Hybrid PKS-NRPS synthetase TAS1.